The primary structure comprises 430 residues: Tektin-2 (430 aa).

2 coiled-coil regions span residues 75-162 (KETL…FQHL) and 226-380 (KNRA…IACK).

The protein belongs to the tektin family. In terms of assembly, microtubule inner protein component of sperm flagellar doublet microtubules. May interact with CCDC172. Ubiquitinated, leading to its degradation. Deubiquitinated by USP16, promoting its stability. Post-translationally, tyrosine phosphorylated. In terms of tissue distribution, expressed in the testes (at protein level).

It localises to the cytoplasm. The protein resides in the cytoskeleton. The protein localises to the cilium axoneme. Its subcellular location is the flagellum axoneme. It is found in the microtubule organizing center. Functionally, microtubule inner protein (MIP) part of the dynein-decorated doublet microtubules (DMTs) in cilia and flagellar axoneme. Plays a key role in the assembly or attachment of the inner dynein arm to microtubules in sperm flagella and tracheal cilia. Forms filamentous polymers in the walls of ciliary and flagellar microtubules. The protein is Tektin-2 (Tekt2) of Mus musculus (Mouse).